A 412-amino-acid chain; its full sequence is Probable inactive allantoicase (412 aa).

This sequence belongs to the allantoicase family.

In terms of biological role, the function of this enzyme is unclear as allantoicase activity is not known to exist in mammals. The polypeptide is Probable inactive allantoicase (ALLC) (Bos taurus (Bovine)).